The sequence spans 77 residues: Sec-independent protein translocase protein TatA (77 aa).

The helical transmembrane segment at 1-21 (MGSFSIWHWLIVLVIVMLVFG) threads the bilayer. Positions 46–77 (GEGKAAADPAQSKELRDSTTIDVEAKEKTRQQ) are disordered.

It belongs to the TatA/E family. In terms of assembly, the Tat system comprises two distinct complexes: a TatABC complex, containing multiple copies of TatA, TatB and TatC subunits, and a separate TatA complex, containing only TatA subunits. Substrates initially bind to the TatABC complex, which probably triggers association of the separate TatA complex to form the active translocon.

It is found in the cell inner membrane. Functionally, part of the twin-arginine translocation (Tat) system that transports large folded proteins containing a characteristic twin-arginine motif in their signal peptide across membranes. TatA could form the protein-conducting channel of the Tat system. This chain is Sec-independent protein translocase protein TatA, found in Cupriavidus necator (strain ATCC 17699 / DSM 428 / KCTC 22496 / NCIMB 10442 / H16 / Stanier 337) (Ralstonia eutropha).